Here is a 110-residue protein sequence, read N- to C-terminus: uncharacterized protein (110 aa).

A helical membrane pass occupies residues 18-34 (MFPLISTFTSIGLGVLM).

It is found in the membrane. This is an uncharacterized protein from Saccharomyces cerevisiae (strain ATCC 204508 / S288c) (Baker's yeast).